The primary structure comprises 90 residues: Probable Fe(2+)-trafficking protein (90 aa).

Belongs to the Fe(2+)-trafficking protein family.

Functionally, could be a mediator in iron transactions between iron acquisition and iron-requiring processes, such as synthesis and/or repair of Fe-S clusters in biosynthetic enzymes. This chain is Probable Fe(2+)-trafficking protein, found in Pseudomonas aeruginosa (strain UCBPP-PA14).